We begin with the raw amino-acid sequence, 150 residues long: D-aminoacyl-tRNA deacylase (150 aa).

Residues 136–137 carry the Gly-cisPro motif, important for rejection of L-amino acids motif; that stretch reads GP.

The protein belongs to the DTD family. Homodimer.

It localises to the cytoplasm. The enzyme catalyses glycyl-tRNA(Ala) + H2O = tRNA(Ala) + glycine + H(+). It catalyses the reaction a D-aminoacyl-tRNA + H2O = a tRNA + a D-alpha-amino acid + H(+). Functionally, an aminoacyl-tRNA editing enzyme that deacylates mischarged D-aminoacyl-tRNAs. Also deacylates mischarged glycyl-tRNA(Ala), protecting cells against glycine mischarging by AlaRS. Acts via tRNA-based rather than protein-based catalysis; rejects L-amino acids rather than detecting D-amino acids in the active site. By recycling D-aminoacyl-tRNA to D-amino acids and free tRNA molecules, this enzyme counteracts the toxicity associated with the formation of D-aminoacyl-tRNA entities in vivo and helps enforce protein L-homochirality. This chain is D-aminoacyl-tRNA deacylase, found in Staphylococcus saprophyticus subsp. saprophyticus (strain ATCC 15305 / DSM 20229 / NCIMB 8711 / NCTC 7292 / S-41).